The following is a 200-amino-acid chain: TATA-box-binding protein 1 (200 aa).

N-acetylthreonine is present on T2. A run of 2 repeats spans residues 25 to 101 and 115 to 192.

Belongs to the TBP family. As to quaternary structure, belongs to the TFIID complex together with the TBP-associated factors (TAFs). Binds DNA as monomer. Interacts with TAF1 (via N-terminus). Interacts with MEE12/CCG1. Associates with PWP2 in the nucleus. Component of a nuclear protein complex containing at least TATA binding proteins (TBPs, e.g. TBP1 and TBP2) and ATX1.

The protein localises to the nucleus. Functionally, general transcription factor that functions at the core of the DNA-binding multiprotein factor TFIID. Binding of TFIID to the TATA box is the initial transcriptional step of the pre-initiation complex (PIC), playing a role in the activation of eukaryotic genes transcribed by RNA polymerase II. The protein is TATA-box-binding protein 1 of Arabidopsis thaliana (Mouse-ear cress).